We begin with the raw amino-acid sequence, 93 residues long: Islet amyloid polypeptide (93 aa).

A signal peptide spans 1 to 23 (MMCISKLPAVLLILSVALNHLRA). Positions 24–35 (TPVRSGSNPQMD) are excised as a propeptide. The cysteines at positions 39 and 44 are disulfide-linked. Residues 64–93 (LPPTNVGSNTYGKRNAAGDPNRESLDFLLV) are disordered. Tyr74 is subject to Tyrosine amide. A propeptide spanning residues 78–93 (NAAGDPNRESLDFLLV) is cleaved from the precursor. A compositionally biased stretch (basic and acidic residues) spans 83–93 (PNRESLDFLLV).

It belongs to the calcitonin family. In terms of assembly, can form homodimers. Interacts with IDE and INS. Interaction with INS inhibits homodimerization and fibril formation.

The protein localises to the secreted. In terms of biological role, amylin/IAPP is a glucoregulatory peptide hormone that plays an important role in the regulation of energy homeostasis. Selectively inhibits insulin-stimulated glucose utilization and glycogen deposition in muscle, while not affecting adipocyte glucose metabolism. IAPP function is mediated by the CALCR-RAMPs (AMYRs) receptor complexes. Amylin can also bind CALCR receptor in the absence of RAMPs, although it is more selective for AMYRs. This is Islet amyloid polypeptide from Mus musculus (Mouse).